The primary structure comprises 259 residues: Protein CDI (259 aa).

Positions 236-259 form a coiled coil; the sequence is FADLWLNEMEEYNKENKKEADNAK.

Mostly expressed in pollen grains and pollen tubes, and, at low levels, in seedlings, roots, stems, leaves, flowers and siliques.

It localises to the cytoplasm. It is found in the cytosol. Its function is as follows. Probable nucleotide-diphospho-sugar transferase required for pollen germination and tube growth. The polypeptide is Protein CDI (Arabidopsis thaliana (Mouse-ear cress)).